We begin with the raw amino-acid sequence, 545 residues long: MAAKDVVFGGEARARMVEGVNILANAVKVTLGPKGRNVVLERSFGAPTVTKDGVSVAKEIELKDKLQNMGAQLVKEVASKTSDNAGDGTTTATVLAQAIVREGSKYVAAGLNPMDLKRGIDKAVTALVAELKKASKATTTSKEIAQVGSISANSDESIGKIIADAMDKVGKEGVITVEDGKSLDNELDVVEGMQFDRGYLSPYFINNPEKQAALLDNPFVLLFDKKISNIRDLLPTLEQVAKAGRPLLIIAEEVEGEALATLVVNTIRGILKVVAVKAPGFGDRRKAMLEDIAILTGGKVIAEEVGLTLEKVTLADLGQAKRIEVGKENTTIIDGAGAAADIEARVKQIRIQIEEATSDYDREKLQERVAKLAGGVAVIKVGAATEVEMKEKKARVEDALHATRAAVEEGIVAGGGVALLRAKQAAGDIKGDNPDQDAGIKLILKAIEAPLREIVANAGGEPSVVVNAVLNGKGNYGFNAANDTYGDMLEMGILDPTKVTRTALQNAASVASLLLTTEAMVAEAPKDDAPAPAMPDMGGMGGMGM.

Residues 30–33 (TLGP), Lys51, 87–91 (DGTTT), Gly415, 479–481 (NAA), and Asp495 each bind ATP. Residues 526–545 (KDDAPAPAMPDMGGMGGMGM) are disordered.

Belongs to the chaperonin (HSP60) family. Forms a cylinder of 14 subunits composed of two heptameric rings stacked back-to-back. Interacts with the co-chaperonin GroES.

It is found in the cytoplasm. The enzyme catalyses ATP + H2O + a folded polypeptide = ADP + phosphate + an unfolded polypeptide.. In terms of biological role, together with its co-chaperonin GroES, plays an essential role in assisting protein folding. The GroEL-GroES system forms a nano-cage that allows encapsulation of the non-native substrate proteins and provides a physical environment optimized to promote and accelerate protein folding. The protein is Chaperonin GroEL of Paracidovorax citrulli (strain AAC00-1) (Acidovorax citrulli).